A 365-amino-acid polypeptide reads, in one-letter code: MTITGIIAEFNPFHNGHKYLLDQAEGLKIVAMSGNFMQRGEPAIVDKWTRAQMALENGADLVVELPFLVSVQAADFFGQGAVNILDRLGIDSLVFGTEEVRDYQKIADLYTEKGAEMEKFVENLPDSLSYPQKTQAMWKEFAGLDFSGNTPNHVLALAYAKAVAGRNIKLHPIQRQGAGYHSVNKDVDFASATALRQHQKDQDFLERFMPSVALFEQASKVIWEDYFPLLRYQILSNPDLTTIYQVNQEMAVRIKEAIKTAQSVEELVELVTTKRYTKARVRRLLTYILMQARENVLPEAIHVLGFTEKGRQHLKSLKGQVSLVSRIGKEPWDAMTQKADQIYQLGNPSIAEQNFGRVPIRIETN.

Residues 7–20 (IAEF…HKYL), glycine 96, asparagine 152, and arginine 175 each bind ATP.

This sequence belongs to the TmcAL family.

It is found in the cytoplasm. It catalyses the reaction cytidine(34) in elongator tRNA(Met) + acetate + ATP = N(4)-acetylcytidine(34) in elongator tRNA(Met) + AMP + diphosphate. In terms of biological role, catalyzes the formation of N(4)-acetylcytidine (ac(4)C) at the wobble position of elongator tRNA(Met), using acetate and ATP as substrates. First activates an acetate ion to form acetyladenylate (Ac-AMP) and then transfers the acetyl group to tRNA to form ac(4)C34. This is tRNA(Met) cytidine acetate ligase from Streptococcus pneumoniae (strain JJA).